Here is a 370-residue protein sequence, read N- to C-terminus: GTPase Obg (370 aa).

One can recognise an Obg domain in the interval 1 to 159 (MKFIDEARIE…RMVRLELKVL (159 aa)). A disordered region spans residues 127-147 (NLHFKSSTNRAPRQKTDGKPG). The region spanning 160 to 334 (ADVGLLGMPN…LCYAVYDYLA (175 aa)) is the OBG-type G domain. GTP is bound by residues 166 to 173 (GMPNAGKS), 191 to 195 (FTTLA), 213 to 216 (DIPG), 284 to 287 (NKLD), and 315 to 317 (SAL). Residues Ser173 and Thr193 each contribute to the Mg(2+) site.

Belongs to the TRAFAC class OBG-HflX-like GTPase superfamily. OBG GTPase family. As to quaternary structure, monomer. Mg(2+) serves as cofactor.

The protein localises to the cytoplasm. An essential GTPase which binds GTP, GDP and possibly (p)ppGpp with moderate affinity, with high nucleotide exchange rates and a fairly low GTP hydrolysis rate. Plays a role in control of the cell cycle, stress response, ribosome biogenesis and in those bacteria that undergo differentiation, in morphogenesis control. This is GTPase Obg from Paraburkholderia phymatum (strain DSM 17167 / CIP 108236 / LMG 21445 / STM815) (Burkholderia phymatum).